The sequence spans 300 residues: GTP cyclohydrolase FolE2 (300 aa).

It belongs to the GTP cyclohydrolase IV family.

It catalyses the reaction GTP + H2O = 7,8-dihydroneopterin 3'-triphosphate + formate + H(+). Its pathway is cofactor biosynthesis; 7,8-dihydroneopterin triphosphate biosynthesis; 7,8-dihydroneopterin triphosphate from GTP: step 1/1. Its function is as follows. Converts GTP to 7,8-dihydroneopterin triphosphate. This is GTP cyclohydrolase FolE2 from Bacillus licheniformis (strain ATCC 14580 / DSM 13 / JCM 2505 / CCUG 7422 / NBRC 12200 / NCIMB 9375 / NCTC 10341 / NRRL NRS-1264 / Gibson 46).